The following is a 430-amino-acid chain: ATP-dependent RNA helicase cgh-1 (430 aa).

Residues Val43–Glu71 carry the Q motif motif. Positions Ile74–Ile244 constitute a Helicase ATP-binding domain. An ATP-binding site is contributed by Ala87–Thr94. The DEAD box signature appears at Asp192–Asp195. Positions Gly254–Leu414 constitute a Helicase C-terminal domain.

It belongs to the DEAD box helicase family. DDX6/DHH1 subfamily. In terms of assembly, interacts with car-1 in a germline ribonucleoprotein complex. Interacts with ifet-1. Interacts with oma-1, which is a component of a ribonucleoprotein complex, in an RNA-dependent manner. In terms of tissue distribution, expression is restricted to two germline precursors Z2 and Z3 in L1 stage hermaphrodites, and is detectable specifically in the gonad at low levels into the L3 stage. Expression is significantly higher during the early L4 stage. In adults, expression remains gonad-specific and was not apparent in the somatically derived uterus. Expressed in germ granules (P granules); when associated with pgl-1.

The protein localises to the cytoplasm. It catalyses the reaction ATP + H2O = ADP + phosphate + H(+). Its function is as follows. Probable RNA helicase required for oocyte and sperm function. Also required to prevent the physiological germline apoptosis mechanism killing essentially all developing oocytes. The polypeptide is ATP-dependent RNA helicase cgh-1 (cgh-1) (Caenorhabditis elegans).